Here is a 279-residue protein sequence, read N- to C-terminus: Ribonuclease Z (279 aa).

Zn(2+) contacts are provided by His-61, His-63, Asp-65, His-66, His-153, Asp-176, and His-240. The Proton acceptor role is filled by Asp-65.

Belongs to the RNase Z family. In terms of assembly, homodimer. Zn(2+) is required as a cofactor.

The catalysed reaction is Endonucleolytic cleavage of RNA, removing extra 3' nucleotides from tRNA precursor, generating 3' termini of tRNAs. A 3'-hydroxy group is left at the tRNA terminus and a 5'-phosphoryl group is left at the trailer molecule.. Its function is as follows. Zinc phosphodiesterase, which displays some tRNA 3'-processing endonuclease activity. Probably involved in tRNA maturation, by removing a 3'-trailer from precursor tRNA. This Mycobacterium marinum (strain ATCC BAA-535 / M) protein is Ribonuclease Z.